The following is a 143-amino-acid chain: MTEIETIGFHYVVEAAGCDPEVLGNADRIRQIFLEAAKVGNMEVKASYFFKFSPTGVSGVVIVAESHISVHTWPEKGYAALDVYTCGTKANPEKAVDYILEQFKAKYAHVSEIKRGIEEDDETFTHMIMTWEEALRKNGNGSG.

Ser66 functions as the Schiff-base intermediate with substrate; via pyruvic acid in the catalytic mechanism. Ser66 carries the pyruvic acid (Ser); by autocatalysis modification. Catalysis depends on His71, which acts as the Proton acceptor; for processing activity. The active-site Proton donor; for catalytic activity is the Cys86.

It belongs to the prokaryotic AdoMetDC family. Type 1 subfamily. In terms of assembly, heterotetramer of two alpha and two beta chains arranged as a dimer of alpha/beta heterodimers. It depends on pyruvate as a cofactor. Is synthesized initially as an inactive proenzyme. Formation of the active enzyme involves a self-maturation process in which the active site pyruvoyl group is generated from an internal serine residue via an autocatalytic post-translational modification. Two non-identical subunits are generated from the proenzyme in this reaction, and the pyruvate is formed at the N-terminus of the alpha chain, which is derived from the carboxyl end of the proenzyme. The post-translation cleavage follows an unusual pathway, termed non-hydrolytic serinolysis, in which the side chain hydroxyl group of the serine supplies its oxygen atom to form the C-terminus of the beta chain, while the remainder of the serine residue undergoes an oxidative deamination to produce ammonia and the pyruvoyl group blocking the N-terminus of the alpha chain.

It catalyses the reaction S-adenosyl-L-methionine + H(+) = S-adenosyl 3-(methylsulfanyl)propylamine + CO2. It functions in the pathway amine and polyamine biosynthesis; S-adenosylmethioninamine biosynthesis; S-adenosylmethioninamine from S-adenosyl-L-methionine: step 1/1. In terms of biological role, catalyzes the decarboxylation of S-adenosylmethionine to S-adenosylmethioninamine (dcAdoMet), the propylamine donor required for the synthesis of the polyamines spermine and spermidine from the diamine putrescine. The polypeptide is S-adenosylmethionine decarboxylase proenzyme (Thermococcus kodakarensis (strain ATCC BAA-918 / JCM 12380 / KOD1) (Pyrococcus kodakaraensis (strain KOD1))).